The sequence spans 941 residues: Pre-mRNA-processing factor 6 (941 aa).

The segment at 1–79 (MNKKKKPFLG…DEDLNDTNYD (79 aa)) is disordered. Residues 39–65 (DANDPVDDRHAPPGKRTVGDQMKKNQA) are compositionally biased toward basic and acidic residues. Residues 66 to 78 (ADDDDEDLNDTNY) are compositionally biased toward acidic residues. S143 is modified (phosphoserine). Phosphothreonine is present on residues T180, T266, and T275. S279 bears the Phosphoserine mark. 9 HAT repeats span residues 384–416 (TDIR…LEEP), 418–444 (DARI…ARLE), 445–476 (TYEN…LEEA), 554–586 (NALE…FEKN), 588–620 (GTRE…SKWL), 622–654 (GDVP…LESE), 689–721 (DNIR…IEEQ), 723–755 (EMME…LEEK), and 855–887 (RKIT…FELQ).

Identified in the spliceosome B complex. Identified in the spliceosome C complex. Associates with the U5 snRNP particle. Component of the U4/U6-U5 tri-snRNP complex composed of the U4, U6 and U5 snRNAs and at least PRPF3, PRPF4, PRPF6, PRPF8, PRPF31, SNRNP200, TXNL4A, SNRNP40, DDX23, CD2BP2, PPIH, SNU13, EFTUD2, SART1 and USP39, LSm proteins LSm2-8 and Sm proteins. Interacts with ARAF. Interacts with AR and NR3C1, but not ESR1, independently of the presence of hormones. Interacts with USH1G. Phosphorylated by PRP4K during spliceosome assembly. As to expression, widely expressed.

Its subcellular location is the nucleus. The protein resides in the nucleoplasm. The protein localises to the nucleus speckle. Functionally, involved in pre-mRNA splicing as component of the U4/U6-U5 tri-snRNP complex, one of the building blocks of the spliceosome. Enhances dihydrotestosterone-induced transactivation activity of AR, as well as dexamethasone-induced transactivation activity of NR3C1, but does not affect estrogen-induced transactivation. In Homo sapiens (Human), this protein is Pre-mRNA-processing factor 6.